Reading from the N-terminus, the 506-residue chain is Phenylacetaldehyde synthase (506 aa).

Pro101, His202, and His317 together coordinate L-phenylalanine. Lys318 bears the N6-(pyridoxal phosphate)lysine mark.

It belongs to the group II decarboxylase family. As to quaternary structure, homotetramer. Pyridoxal 5'-phosphate serves as cofactor. Highly expressed in corolla limbs and at lower levels in corolla tubes and ovaries.

It catalyses the reaction L-phenylalanine + O2 + H2O + H(+) = 2-phenylacetaldehyde + H2O2 + NH4(+) + CO2. In terms of biological role, bifunctional enzyme that catalyzes the decarboxylation of L-phenylalanine to 2-phenylethylamine, which is then oxidized to form 2-phenylacetaldehyde, a constituent of floral scent. 2-phenylacetaldehyde is a precursor of 2-phenylethanol, another constituent of floral scent. The protein is Phenylacetaldehyde synthase of Petunia hybrida (Petunia).